We begin with the raw amino-acid sequence, 495 residues long: Cornulin (495 aa).

The EF-hand domain maps to H49–A84. Residues D62, D64, T66, T68, and E73 each coordinate Ca(2+). Disordered stretches follow at residues A96–G439 and L460–I481. The segment covering S99–S110 has biased composition (polar residues). Residues H137 to G151 are compositionally biased toward low complexity. Polar residues predominate over residues V152–K194. Residues G196–Q222 show a composition bias toward basic and acidic residues. The span at T226 to V242 shows a compositional bias: low complexity. Polar residues-rich tracts occupy residues E243–V282 and Q290–E303. Low complexity predominate over residues S307–Q324. The segment covering G334 to T355 has biased composition (polar residues). Residues Q374–Q385 are compositionally biased toward low complexity. Polar residues-rich tracts occupy residues Q403–T420 and L460–A473.

It belongs to the S100-fused protein family. Homodimer. In terms of tissue distribution, expressed in the basal skin layer (at protein level). Squamous epithelia cell-specific. Expressed in the esophagus (periphery of the cells of the granular and the upper spinous layers), foreskin (granular and lower cornified cells), scalp skin (granular layer), inner root sheath of the hair follicle and in primary keratinocytes (at protein level). Expressed in the squamous epithelium of the cervix, esophagus, foreskin and larynx. Expressed in the fetal bladder and scalp skin. Expressed at very low levels in the lung, kidney, uterus, skeletal muscle, heart and fetal brain. Undetectable or barely detectable in esophageal and oral squamous cell carcinoma compared with the matched adjacent normal esophageal mucosa. Undetectable or barely detectable in larynx and esophagus from patients with pH-documented laryngopharyngeal reflux (LPR).

It is found in the cytoplasm. Functionally, promotes cell proliferation, G1/S cell cycle progression and induces expression of the cell cycle regulator CCND1. Regulates proliferation induced by pro-inflammatory cytokine response via activation of NFKB1 and PI3K/AKT signaling pathways. This is Cornulin (CRNN) from Homo sapiens (Human).